A 151-amino-acid chain; its full sequence is Ribosome maturation factor RimP (151 aa).

The protein belongs to the RimP family.

The protein localises to the cytoplasm. Its function is as follows. Required for maturation of 30S ribosomal subunits. In Saccharophagus degradans (strain 2-40 / ATCC 43961 / DSM 17024), this protein is Ribosome maturation factor RimP.